The following is a 115-amino-acid chain: Meiotically up-regulated gene 168 protein (115 aa).

Positions 82–115 (SVSPVHTKAEEPGLGLTPMNSADFSNKIASRYRS) are disordered. Positions 99–109 (PMNSADFSNKI) are enriched in polar residues.

The protein localises to the nucleus. Its function is as follows. Has a role in meiosis. This Schizosaccharomyces pombe (strain 972 / ATCC 24843) (Fission yeast) protein is Meiotically up-regulated gene 168 protein (mug168).